A 152-amino-acid polypeptide reads, in one-letter code: Ribosomal RNA large subunit methyltransferase H (152 aa).

S-adenosyl-L-methionine-binding positions include Leu68, Gly100, and 119 to 124 (LGVMTW).

Belongs to the RNA methyltransferase RlmH family. As to quaternary structure, homodimer.

It is found in the cytoplasm. The catalysed reaction is pseudouridine(1915) in 23S rRNA + S-adenosyl-L-methionine = N(3)-methylpseudouridine(1915) in 23S rRNA + S-adenosyl-L-homocysteine + H(+). Its function is as follows. Specifically methylates the pseudouridine at position 1915 (m3Psi1915) in 23S rRNA. The sequence is that of Ribosomal RNA large subunit methyltransferase H from Rhodospirillum rubrum (strain ATCC 11170 / ATH 1.1.1 / DSM 467 / LMG 4362 / NCIMB 8255 / S1).